A 587-amino-acid polypeptide reads, in one-letter code: 2-succinyl-5-enolpyruvyl-6-hydroxy-3-cyclohexene-1-carboxylate synthase (587 aa).

It belongs to the TPP enzyme family. MenD subfamily. As to quaternary structure, homodimer. It depends on Mg(2+) as a cofactor. Mn(2+) is required as a cofactor. The cofactor is thiamine diphosphate.

The enzyme catalyses isochorismate + 2-oxoglutarate + H(+) = 5-enolpyruvoyl-6-hydroxy-2-succinyl-cyclohex-3-ene-1-carboxylate + CO2. Its pathway is quinol/quinone metabolism; 1,4-dihydroxy-2-naphthoate biosynthesis; 1,4-dihydroxy-2-naphthoate from chorismate: step 2/7. It participates in cofactor biosynthesis; phylloquinone biosynthesis. Its function is as follows. Catalyzes the thiamine diphosphate-dependent decarboxylation of 2-oxoglutarate and the subsequent addition of the resulting succinic semialdehyde-thiamine pyrophosphate anion to isochorismate to yield 2-succinyl-5-enolpyruvyl-6-hydroxy-3-cyclohexene-1-carboxylate (SEPHCHC). This is 2-succinyl-5-enolpyruvyl-6-hydroxy-3-cyclohexene-1-carboxylate synthase from Prochlorococcus marinus (strain MIT 9301).